Here is a 347-residue protein sequence, read N- to C-terminus: NADH-ubiquinone oxidoreductase chain 2 (347 aa).

Transmembrane regions (helical) follow at residues 13–33 (IFAG…WVGL), 55–75 (AAIK…MAIL), 96–116 (LMIV…FWVP), 123–143 (PLMS…SIMY), 150–170 (NVSL…WGGL), 178–198 (ILAY…PYNP), 201–221 (TILN…LLNL), 247–267 (TLLS…WLII), 277–297 (ITPT…LRLI), and 325–345 (FLPT…FMLM).

Belongs to the complex I subunit 2 family. As to quaternary structure, core subunit of respiratory chain NADH dehydrogenase (Complex I) which is composed of 45 different subunits. Interacts with TMEM242.

It is found in the mitochondrion inner membrane. The catalysed reaction is a ubiquinone + NADH + 5 H(+)(in) = a ubiquinol + NAD(+) + 4 H(+)(out). In terms of biological role, core subunit of the mitochondrial membrane respiratory chain NADH dehydrogenase (Complex I) which catalyzes electron transfer from NADH through the respiratory chain, using ubiquinone as an electron acceptor. Essential for the catalytic activity and assembly of complex I. The sequence is that of NADH-ubiquinone oxidoreductase chain 2 from Gorilla gorilla gorilla (Western lowland gorilla).